The sequence spans 395 residues: General transcription factor IIH subunit 2 (395 aa).

A VWFA domain is found at 60-236; sequence HLYVVVDGSR…HYKELLTHHV (177 aa). Phosphotyrosine is present on Y95. A C4-type zinc finger spans residues 291-308; that stretch reads CPQCRAKYCELPVECKIC.

The protein belongs to the GTF2H2 family. Component of the TFIID-containing RNA polymerase II pre-initiation complex that is composed of TBP and at least GTF2A1, GTF2A2, GTF2E1, GTF2E2, GTF2F1, GTF2H2, GTF2H3, GTF2H4, GTF2H5, GTF2B, TCEA1, ERCC2 and ERCC3. Component of the 7-subunit TFIIH core complex composed of XPB/ERCC3, XPD/ERCC2, GTF2H1, GTF2H2, GTF2H3, GTF2H4 and GTF2H5, which is active in NER. The core complex associates with the 3-subunit CDK-activating kinase (CAK) module composed of CCNH/cyclin H, CDK7 and MNAT1 to form the 10-subunit holoenzyme (holo-TFIIH) active in transcription. Interacts with XPB, XPD, GTF2H1 and GTF2H3. As to quaternary structure, (Microbial infection) Interacts with varicella-zoster virus IE63 protein. In terms of tissue distribution, widely expressed, with higher expression in skeletal muscle.

It localises to the nucleus. Its function is as follows. Component of the general transcription and DNA repair factor IIH (TFIIH) core complex, which is involved in general and transcription-coupled nucleotide excision repair (NER) of damaged DNA and, when complexed to CAK, in RNA transcription by RNA polymerase II. In NER, TFIIH acts by opening DNA around the lesion to allow the excision of the damaged oligonucleotide and its replacement by a new DNA fragment. In transcription, TFIIH has an essential role in transcription initiation. When the pre-initiation complex (PIC) has been established, TFIIH is required for promoter opening and promoter escape. Phosphorylation of the C-terminal tail (CTD) of the largest subunit of RNA polymerase II by the kinase module CAK controls the initiation of transcription. The N-terminus of GTF2H2 interacts with and regulates XPD whereas an intact C-terminus is required for a successful escape of RNAP II form the promoter. The polypeptide is General transcription factor IIH subunit 2 (GTF2H2) (Homo sapiens (Human)).